A 123-amino-acid chain; its full sequence is Omega-oxotoxin-Ot1a (123 aa).

The N-terminal stretch at 1–16 is a signal peptide; the sequence is MKIVLVFVCTLYLAQA. Positions 17–54 are excised as a propeptide; that stretch reads TYLSEQDVNEVSEFLEALDQANEAASEMVEAAETEEAR. The Oxytoxin-type inhibitor cystine knot (ICK) domain occupies 55–122; that stretch reads DWECLPLHSS…GKINTCDKYK (68 aa). Cystine bridges form between C58-C72, C65-C77, C69-C118, C71-C106, and C79-C104.

Belongs to the spiderine family. Spiderine subfamily. Mass spectrometry data suggest a carboxylated free C-terminal residue. In terms of tissue distribution, expressed by the venom gland.

Its subcellular location is the secreted. Its function is as follows. Weak blocker of vertebrate P/Q-, N- and L-type voltage-gated calcium channels (Cav1 and Cav2). Is both paralytic and lethal when injected into lepidopteran larvae. Is not toxic to mice. The sequence is that of Omega-oxotoxin-Ot1a from Oxyopes takobius (Lynx spider).